A 430-amino-acid chain; its full sequence is Histidinol dehydrogenase (430 aa).

NAD(+) is bound by residues Tyr130, Gln191, and Asn214. Ser237, Gln259, and His262 together coordinate substrate. Zn(2+) contacts are provided by Gln259 and His262. Residues Glu327 and His328 each act as proton acceptor in the active site. 4 residues coordinate substrate: His328, Asp361, Glu415, and His420. Asp361 is a binding site for Zn(2+). His420 is a Zn(2+) binding site.

This sequence belongs to the histidinol dehydrogenase family. The cofactor is Zn(2+).

It catalyses the reaction L-histidinol + 2 NAD(+) + H2O = L-histidine + 2 NADH + 3 H(+). It participates in amino-acid biosynthesis; L-histidine biosynthesis; L-histidine from 5-phospho-alpha-D-ribose 1-diphosphate: step 9/9. In terms of biological role, catalyzes the sequential NAD-dependent oxidations of L-histidinol to L-histidinaldehyde and then to L-histidine. The polypeptide is Histidinol dehydrogenase (hisD) (Zymomonas mobilis subsp. mobilis (strain ATCC 31821 / ZM4 / CP4)).